Consider the following 223-residue polypeptide: Probable glutathione S-transferase (223 aa).

The GST N-terminal domain occupies 2-81 (AEVKLLGFWY…YIDETFEGPS (80 aa)). Glutathione contacts are provided by residues S12, K39, V53, and 65-66 (ES). The 127-residue stretch at 86–212 (DPYDRALARF…ELLAFFRARF (127 aa)) folds into the GST C-terminal domain.

The protein belongs to the GST superfamily. HSP26 family. In terms of tissue distribution, root tip-specific expression.

It carries out the reaction RX + glutathione = an S-substituted glutathione + a halide anion + H(+). The protein is Probable glutathione S-transferase of Nicotiana tabacum (Common tobacco).